Here is a 193-residue protein sequence, read N- to C-terminus: Putative manganese efflux pump MntP (193 aa).

6 helical membrane passes run 6-26, 41-61, 65-85, 107-127, 132-152, and 169-189; these read LLGL…AVGI, YHFG…GTGI, TQSY…ANMI, LIIL…SLSM, IWYP…FGML, and VLGG…NGVF.

It belongs to the MntP (TC 9.B.29) family.

Its subcellular location is the cell inner membrane. Probably functions as a manganese efflux pump. This is Putative manganese efflux pump MntP from Desulfotalea psychrophila (strain LSv54 / DSM 12343).